The following is a 329-amino-acid chain: Malate dehydrogenase (329 aa).

An NAD(+)-binding site is contributed by 12–18 (GAAGQIG). Substrate is bound by residues R93 and R99. NAD(+) is bound by residues N106, Q113, and 130–132 (TGN). Positions 132 and 163 each coordinate substrate. H188 acts as the Proton acceptor in catalysis.

It belongs to the LDH/MDH superfamily. MDH type 2 family.

It carries out the reaction (S)-malate + NAD(+) = oxaloacetate + NADH + H(+). Its function is as follows. Catalyzes the reversible oxidation of malate to oxaloacetate. This is Malate dehydrogenase from Mycobacterium leprae (strain TN).